Consider the following 306-residue polypeptide: Mitochondrial brown fat uncoupling protein 1 (306 aa).

Residues 1-10 are Mitochondrial intermembrane-facing; the sequence is MVGTTTTDVP. The helical transmembrane segment at 11 to 32 threads the bilayer; it reads PTMGVKIFSAGVAACLADVITF. Solcar repeat units lie at residues 11-102, 110-200, and 209-294; these read PTMG…VQEF, PSLG…MKGA, and DDVP…LKGE. Over 33–73 the chain is Mitochondrial matrix; it reads PLDTAKVRQQIQGEFPITSGIRYKGVLGTITTLAKTEGPLK. Position 56 (Lys-56) interacts with fatty acid 16:0. Residues 74–96 form a helical membrane-spanning segment; that stretch reads LYSGLPAGLQRQISFASLRIGLY. The Mitochondrial intermembrane portion of the chain corresponds to 97-115; the sequence is DTVQEFFTSGEETPSLGSK. Residues 116-132 form a helical membrane-spanning segment; it reads ISAGLTTGGVAVFIGQP. Topologically, residues 133-177 are mitochondrial matrix; it reads TEVVKVRLQAQSHLHGLKPRYTGTYNAYRIIATTESLTSLWKGTT. A helical transmembrane segment spans residues 178 to 194; sequence PNLLRNVIINCTELVTY. At 195–211 the chain is on the mitochondrial intermembrane side; that stretch reads DLMKGALVRNEILADDV. A helical transmembrane segment spans residues 212 to 231; the sequence is PCHFVSALIAGFCTTLLSSP. Over 232-265 the chain is Mitochondrial matrix; the sequence is VDVVKTRFINSPPGQYASVPNCAMTMFTKEGPTA. At Cys-253 the chain carries Cysteine sulfenic acid (-SOH). The chain crosses the membrane as a helical span at residues 266–288; that stretch reads FFKGFVPSFLRLGSWNVIMFVCF. Residue Lys-268 participates in fatty acid 16:0 binding. At 289-306 the chain is on the mitochondrial intermembrane side; sequence EKLKGELMRSRQTVDCAT.

It belongs to the mitochondrial carrier (TC 2.A.29) family. Most probably functions as a monomer. Binds one purine nucleotide per monomer. However, has also been suggested to function as a homodimer or a homotetramer. Tightly associates with cardiolipin in the mitochondrion inner membrane; may stabilize and regulate its activity. May undergo sulfenylation upon cold exposure. May increase the sensitivity of UCP1 thermogenic function to the activation by noradrenaline probably through structural effects. Post-translationally, may undergo ubiquitin-mediated proteasomal degradation. In terms of tissue distribution, brown adipose tissue.

It is found in the mitochondrion inner membrane. The enzyme catalyses H(+)(in) = H(+)(out). With respect to regulation, has no constitutive proton transporter activity and has to be activated by long-chain fatty acids/LCFAs. Inhibited by purine nucleotides. Both purine nucleotides and LCFAs bind the cytosolic side of the transporter and directly compete to activate or inhibit it. Activated by noradrenaline and reactive oxygen species. Despite lacking canonical translational encoding for selenocysteine, a small pool of the protein has been observed to selectively incorporate selenocysteine at 'Cys-253'. Selenocysteine-modified protein is highly sensitive to redox modification and may constitute a pool of protein highly sensitive to activation by elevated levels of reactive oxygen species (ROS). Its function is as follows. Mitochondrial protein responsible for thermogenic respiration, a specialized capacity of brown adipose tissue and beige fat that participates in non-shivering adaptive thermogenesis to temperature and diet variations and more generally to the regulation of energy balance. Functions as a long-chain fatty acid/LCFA and proton symporter, simultaneously transporting one LCFA and one proton through the inner mitochondrial membrane. However, LCFAs remaining associated with the transporter via their hydrophobic tails, it results in an apparent transport of protons activated by LCFAs. Thereby, dissipates the mitochondrial proton gradient and converts the energy of substrate oxydation into heat instead of ATP. Regulates the production of reactive oxygen species/ROS by mitochondria. This chain is Mitochondrial brown fat uncoupling protein 1, found in Oryctolagus cuniculus (Rabbit).